Consider the following 380-residue polypeptide: Transmembrane protein 229A (380 aa).

The disordered stretch occupies residues 1 to 40 (MAGSDVDSEGPARRGGAARRPGAPGGPGSEAAAGCPEPLS). 2 helical membrane passes run 51–71 (LPAW…DVLV) and 117–137 (AFVF…TLAG). Residues 188 to 236 (RQQQQQQQQQQQQRRGALPVPPGARVPTAAGARRRRPRGPRGAGGAPSQ) form a disordered region. The span at 190-202 (QQQQQQQQQQQRR) shows a compositional bias: low complexity. A run of 4 helical transmembrane segments spans residues 244–264 (FLFF…FFNV), 278–298 (LWSF…YFHL), 310–330 (VPIY…GLRT), and 343–363 (LNFM…LSVY).

The protein belongs to the TMEM229 family.

The protein resides in the membrane. This Homo sapiens (Human) protein is Transmembrane protein 229A (TMEM229A).